Here is a 105-residue protein sequence, read N- to C-terminus: ATP-dependent Clp protease adapter protein ClpS (105 aa).

Residues 1 to 27 (MVVMSAPTEPKSRPGTTGQRESAPEDV) are disordered.

Belongs to the ClpS family. Binds to the N-terminal domain of the chaperone ClpA.

Involved in the modulation of the specificity of the ClpAP-mediated ATP-dependent protein degradation. This is ATP-dependent Clp protease adapter protein ClpS from Mycolicibacterium paratuberculosis (strain ATCC BAA-968 / K-10) (Mycobacterium paratuberculosis).